Here is a 95-residue protein sequence, read N- to C-terminus: Small ribosomal subunit protein bS20 (95 aa).

2 disordered regions span residues 1 to 26 (MALR…RSRK) and 76 to 95 (KSRL…AQPA). The segment covering 80–95 (AKALNKAKAAQAAQPA) has biased composition (low complexity).

It belongs to the bacterial ribosomal protein bS20 family.

Its function is as follows. Binds directly to 16S ribosomal RNA. The sequence is that of Small ribosomal subunit protein bS20 from Deinococcus geothermalis (strain DSM 11300 / CIP 105573 / AG-3a).